A 258-amino-acid polypeptide reads, in one-letter code: 5'-nucleotidase SurE (258 aa).

Positions 9, 10, 42, and 96 each coordinate a divalent metal cation.

The protein belongs to the SurE nucleotidase family. The cofactor is a divalent metal cation.

It localises to the cytoplasm. The catalysed reaction is a ribonucleoside 5'-phosphate + H2O = a ribonucleoside + phosphate. In terms of biological role, nucleotidase that shows phosphatase activity on nucleoside 5'-monophosphates. The protein is 5'-nucleotidase SurE of Campylobacter jejuni subsp. jejuni serotype O:2 (strain ATCC 700819 / NCTC 11168).